A 902-amino-acid chain; its full sequence is Gamma-tubulin complex component 2 (902 aa).

The residue at position 83 (Tyr-83) is a Phosphotyrosine. The interval 874-902 (AERSQKATPQVPVLRGPPAPAPRVAVTAQ) is disordered.

The protein belongs to the TUBGCP family. In terms of assembly, component of the gamma-tubulin ring complex (gTuRC) consisting of TUBGCP2, TUBGCP3, TUBGCP4, TUBGCP5 and TUBGCP6 and gamma-tubulin TUBG1 or TUBG2. TUBGCP2, TUBGCP3, TUBGCP4, TUBGCP5 and TUBGCP6 assemble in a 5:5:2:1:1 stoichiometry; each is associated with a gamma-tubulin, thereby arranging 14 gamma-tubulins in a helical manner. Gamma-tubulin at the first position is blocked by TUBGCP3 at the last position, allowing 13 protafilaments to grow into a microtubule. The gTuRC (via TUBGCP3 and TUBGCP6) interacts with ACTB and MZT1; the interactions form a luminal bridge that stabilizes the initial structure during complex assembly. The gTuRC (via TUBGCP2) interacts with MZT2A/MZT2B and CDK5RAP2 (via CM1 motif); the interactions play a role in gTuRC activation. Interacts with ATF5; the ATF5:PCNT:polyglutamylated tubulin (PGT) tripartite unites the mother centriole and the pericentriolar material (PCM) in the centrosome. In terms of tissue distribution, ubiquitously expressed.

The protein localises to the cytoplasm. It localises to the cytoskeleton. The protein resides in the microtubule organizing center. Its subcellular location is the centrosome. Functionally, component of the gamma-tubulin ring complex (gTuRC) which mediates microtubule nucleation. The gTuRC regulates the minus-end nucleation of alpha-beta tubulin heterodimers that grow into microtubule protafilaments, a critical step in centrosome duplication and spindle formation. Plays a role in neuronal migration. The protein is Gamma-tubulin complex component 2 (TUBGCP2) of Homo sapiens (Human).